The chain runs to 952 residues: Histone deacetylase 7 (952 aa).

2 transcription repression regions span residues 1–268 and 218–546; these read MDLR…DSDR and GPNP…EHAG. The segment at 49–149 is interaction with MEF2A; the sequence is SMDTPMPELQ…LPSDPPEHFP (101 aa). The residue at position 109 (serine 109) is a Phosphoserine. Disordered regions lie at residues 130–224 and 261–283; these read LSSF…PILG and PARA…ILGS. The residue at position 155 (serine 155) is a Phosphoserine; by MARK2, MARK3 and PKD/PRKD1. Basic and acidic residues predominate over residues 167 to 181; that stretch reads KSLERRKNPLLRKES. Serine 181 bears the Phosphoserine; by PKD/PRKD2 mark. Low complexity predominate over residues 197–212; the sequence is SSPSSSSTPASGCSSP. Serine 283 carries the post-translational modification Phosphoserine. Threonine 286 carries the post-translational modification Phosphothreonine. Disordered stretches follow at residues 349–377, 389–441, and 460–510; these read LHWP…MQPR, KRSA…GPAP, and LPRG…SSSE. Position 358 is a phosphoserine; by PKD/PRKD1 (serine 358). Positions 360–374 are enriched in pro residues; that stretch reads PLPPSATAPPPPGPM. Phosphoserine is present on residues serine 364, serine 405, serine 486, serine 487, and serine 507. Positions 482–503 are enriched in low complexity; sequence SRAQSSPAAPASLSAPEPASQA. The histone deacetylase stretch occupies residues 512 to 865; the sequence is PARTLPFTTG…VAALLGNRVD (354 aa). Cysteine 533, cysteine 535, and histidine 541 together coordinate Zn(2+). Phosphoserine is present on serine 595. Cysteine 618 provides a ligand contact to Zn(2+). Residue histidine 670 is part of the active site. The interaction with SIN3A stretch occupies residues 877 to 952; it reads NLNAIRSLEA…LVEEEEPMNL (76 aa). A Nuclear export signal motif is present at residues 917–952; the sequence is KEEVEAVTALASLSVGILAEDRPSEQLVEEEEPMNL.

The protein belongs to the histone deacetylase family. HD type 2 subfamily. In terms of assembly, interacts with HDAC1, HDAC2, HDAC3, HDAC4, HDAC5, NCOR1, NCOR2, SIN3A, SIN3B, RBBP4, RBBP7, MTA1L1, SAP30 and MBD3. Interacts with KAT5 and EDNRA. Interacts with the 14-3-3 protein YWHAE, MEF2A, MEF2B and MEF2C. Interacts with ZMYND15. Interacts with KDM5B. Interacts with PML. Interacts with FOXP3. Interacts with RARA. In terms of processing, may be phosphorylated by CaMK1. Phosphorylated by the PKC kinases PKN1 and PKN2, impairing nuclear import. Phosphorylation at Ser-155 by MARK2, MARK3 and PRKD1 promotes interaction with 14-3-3 proteins and export from the nucleus. Phosphorylation at Ser-155 is a prerequisite for phosphorylation at Ser-181.

It localises to the nucleus. The protein resides in the cytoplasm. The catalysed reaction is N(6)-acetyl-L-lysyl-[histone] + H2O = L-lysyl-[histone] + acetate. The enzyme catalyses N(6)-acetyl-L-lysyl-[protein] + H2O = L-lysyl-[protein] + acetate. In terms of biological role, responsible for the deacetylation of lysine residues on the N-terminal part of the core histones (H2A, H2B, H3 and H4). Histone deacetylation gives a tag for epigenetic repression and plays an important role in transcriptional regulation, cell cycle progression and developmental events. Histone deacetylases act via the formation of large multiprotein complexes. Involved in muscle maturation by repressing transcription of myocyte enhancer factors such as MEF2A, MEF2B and MEF2C. During muscle differentiation, it shuttles into the cytoplasm, allowing the expression of myocyte enhancer factors. May be involved in Epstein-Barr virus (EBV) latency, possibly by repressing the viral BZLF1 gene. Positively regulates the transcriptional repressor activity of FOXP3. Serves as a corepressor of RARA, causing its deacetylation and inhibition of RARE DNA element binding. In association with RARA, plays a role in the repression of microRNA-10a and thereby in the inflammatory response. Also acetylates non-histone proteins, such as ALKBH5. The chain is Histone deacetylase 7 (HDAC7) from Homo sapiens (Human).